Reading from the N-terminus, the 339-residue chain is D-erythrose-4-phosphate dehydrogenase (339 aa).

Position 11 to 12 (R11 to I12) interacts with NAD(+). Substrate is bound by residues S158–T160, R204, T217–K218, and R240. C159 (nucleophile) is an active-site residue. N322 contacts NAD(+).

This sequence belongs to the glyceraldehyde-3-phosphate dehydrogenase family. Epd subfamily. In terms of assembly, homotetramer.

It localises to the cytoplasm. The catalysed reaction is D-erythrose 4-phosphate + NAD(+) + H2O = 4-phospho-D-erythronate + NADH + 2 H(+). It participates in cofactor biosynthesis; pyridoxine 5'-phosphate biosynthesis; pyridoxine 5'-phosphate from D-erythrose 4-phosphate: step 1/5. In terms of biological role, catalyzes the NAD-dependent conversion of D-erythrose 4-phosphate to 4-phosphoerythronate. This Aliivibrio salmonicida (strain LFI1238) (Vibrio salmonicida (strain LFI1238)) protein is D-erythrose-4-phosphate dehydrogenase.